A 304-amino-acid polypeptide reads, in one-letter code: Sulfotransferase 1C3 (304 aa).

56-61 (KSGTTW) contributes to the 3'-phosphoadenylyl sulfate binding site. 115–117 (KTH) lines the substrate pocket. Residue histidine 117 is the Proton acceptor of the active site. Residues arginine 139, serine 147, tyrosine 202, 236–241 (TSFDVM), and 264–268 (FMRKG) each bind 3'-phosphoadenylyl sulfate.

The protein belongs to the sulfotransferase 1 family. As to expression, not detectable in any of the tissues tested. In terms of tissue distribution, expressed in the small intestine.

It localises to the cytoplasm. It carries out the reaction an alcohol + 3'-phosphoadenylyl sulfate = an alkyl sulfate + adenosine 3',5'-bisphosphate + H(+). It catalyses the reaction a phenol + 3'-phosphoadenylyl sulfate = an aryl sulfate + adenosine 3',5'-bisphosphate + H(+). The catalysed reaction is lithocholate + 3'-phosphoadenylyl sulfate = lithocholate sulfate + adenosine 3',5'-bisphosphate + H(+). Its function is as follows. Sulfotransferase that utilizes 3'-phospho-5'-adenylyl sulfate (PAPS) as sulfonate donor. Has sulfotransferase activity towards various substrates, such as bile acids, thyroid hormones and toward xenobiotic compounds such as chloro phenols and hydroxypyrenes. Lithocholic acid appears to be the best substrate among the endogenous compounds tested and 3,3',5,5'-tetrachloro-4,4'-biphenyldiol shows the highest specific activity among the xenobiotic compounds. Exhibits weak sulphating activity and only toward chloro phenols (pentachlorophenol and 3,3',5,5'-tetrachloro-4,4'-biphenyldiol). The polypeptide is Sulfotransferase 1C3 (SULT1C3) (Homo sapiens (Human)).